Here is a 74-residue protein sequence, read N- to C-terminus: Large ribosomal subunit protein bL28 (74 aa).

Belongs to the bacterial ribosomal protein bL28 family.

This Buchnera aphidicola subsp. Baizongia pistaciae (strain Bp) protein is Large ribosomal subunit protein bL28.